The primary structure comprises 213 residues: ATP synthase peripheral stalk subunit OSCP, mitochondrial (213 aa).

The transit peptide at 1 to 23 (MAAPATSVLSRQVRSFSTSVVRP) directs the protein to the mitochondrion. An SIFI-degron motif is present at residues 5-23 (ATSVLSRQVRSFSTSVVRP). K60, K70, and K73 each carry N6-acetyllysine. K90 bears the N6-succinyllysine mark. K100 and K158 each carry N6-acetyllysine; alternate. N6-succinyllysine; alternate occurs at positions 100 and 158. An N6-acetyllysine mark is found at K176 and K192. An N6-succinyllysine modification is found at K199.

This sequence belongs to the ATPase delta chain family. In terms of assembly, component of the ATP synthase complex composed at least of ATP5F1A/subunit alpha, ATP5F1B/subunit beta, ATP5MC1/subunit c (homooctomer), MT-ATP6/subunit a, MT-ATP8/subunit 8, ATP5ME/subunit e, ATP5MF/subunit f, ATP5MG/subunit g, ATP5MK/subunit k, ATP5MJ/subunit j, ATP5F1C/subunit gamma, ATP5F1D/subunit delta, ATP5F1E/subunit epsilon, ATP5PF/subunit F6, ATP5PB/subunit b, ATP5PD/subunit d, ATP5PO/subunit OSCP. ATP synthase complex consists of a soluble F(1) head domain (subunits alpha(3) and beta(3)) - the catalytic core - and a membrane F(0) domain - the membrane proton channel (subunits c, a, 8, e, f, g, k and j). These two domains are linked by a central stalk (subunits gamma, delta, and epsilon) rotating inside the F1 region and a stationary peripheral stalk (subunits F6, b, d, and OSCP). In terms of processing, in response to mitochondrial stress, the precursor protein is ubiquitinated by the SIFI complex in the cytoplasm before mitochondrial import, leading to its degradation. Within the SIFI complex, UBR4 initiates ubiquitin chain that are further elongated or branched by KCMF1. As to expression, expressed by the principal cells of the epididymis. Detected in flagella of epididymal sperm (at protein level).

It is found in the mitochondrion. It localises to the mitochondrion inner membrane. Its function is as follows. Subunit OSCP, of the mitochondrial membrane ATP synthase complex (F(1)F(0) ATP synthase or Complex V) that produces ATP from ADP in the presence of a proton gradient across the membrane which is generated by electron transport complexes of the respiratory chain. ATP synthase complex consist of a soluble F(1) head domain - the catalytic core - and a membrane F(1) domain - the membrane proton channel. These two domains are linked by a central stalk rotating inside the F(1) region and a stationary peripheral stalk. During catalysis, ATP synthesis in the catalytic domain of F(1) is coupled via a rotary mechanism of the central stalk subunits to proton translocation. In vivo, can only synthesize ATP although its ATP hydrolase activity can be activated artificially in vitro. Part of the complex F(0) domain. Part of the complex F(0) domain and the peripheric stalk, which acts as a stator to hold the catalytic alpha(3)beta(3) subcomplex and subunit a/ATP6 static relative to the rotary elements. In Rattus norvegicus (Rat), this protein is ATP synthase peripheral stalk subunit OSCP, mitochondrial.